The chain runs to 390 residues: MLIYLIAGEPSGDLLGGRLMAALKERLGEGVSFAGIGGESMRAEGLTSLFPMTELSVMGLVEVLPRIPKILRRVKQTISDIETKRPDALVTIDSWGFNGRIQAGLKARGVPVPRIHYVAPMVWAWKSGRTKTLARVLDLLLTLLPNEPEWFEKEGLKTLHVGHPVIEGAASRGDGAAFRVRHGFAPDRKLLCVLPGSRHSETAKLLAPFGETIALLARRFPDLAVVVPTVETVADEVSQAVKSWALPSMVVRGPEKYDAFAACDAALAASGTVALELAMARLPAVITYKVSPVSAFIATRFLGLSLKFVTLVNILVDEAVMPELLQDDCRPDKLAAAVEHLLTDEAARALQAAGARRALEKLGLGGESPGKRAADAVIDFIRQGKEQRNG.

It belongs to the LpxB family.

It catalyses the reaction a lipid X + a UDP-2-N,3-O-bis[(3R)-3-hydroxyacyl]-alpha-D-glucosamine = a lipid A disaccharide + UDP + H(+). Its pathway is bacterial outer membrane biogenesis; LPS lipid A biosynthesis. Functionally, condensation of UDP-2,3-diacylglucosamine and 2,3-diacylglucosamine-1-phosphate to form lipid A disaccharide, a precursor of lipid A, a phosphorylated glycolipid that anchors the lipopolysaccharide to the outer membrane of the cell. The protein is Lipid-A-disaccharide synthase of Paramagnetospirillum magneticum (strain ATCC 700264 / AMB-1) (Magnetospirillum magneticum).